We begin with the raw amino-acid sequence, 428 residues long: 3-phosphoshikimate 1-carboxyvinyltransferase (428 aa).

3-phosphoshikimate is bound by residues lysine 23, serine 24, and arginine 28. Residue lysine 23 participates in phosphoenolpyruvate binding. Phosphoenolpyruvate-binding residues include glycine 92 and arginine 120. Positions 165, 167, 312, and 339 each coordinate 3-phosphoshikimate. Glutamine 167 contributes to the phosphoenolpyruvate binding site. Residue aspartate 312 is the Proton acceptor of the active site. Positions 343 and 384 each coordinate phosphoenolpyruvate.

The protein belongs to the EPSP synthase family. Monomer.

It localises to the cytoplasm. It carries out the reaction 3-phosphoshikimate + phosphoenolpyruvate = 5-O-(1-carboxyvinyl)-3-phosphoshikimate + phosphate. It participates in metabolic intermediate biosynthesis; chorismate biosynthesis; chorismate from D-erythrose 4-phosphate and phosphoenolpyruvate: step 6/7. In terms of biological role, catalyzes the transfer of the enolpyruvyl moiety of phosphoenolpyruvate (PEP) to the 5-hydroxyl of shikimate-3-phosphate (S3P) to produce enolpyruvyl shikimate-3-phosphate and inorganic phosphate. The chain is 3-phosphoshikimate 1-carboxyvinyltransferase from Sulfurimonas denitrificans (strain ATCC 33889 / DSM 1251) (Thiomicrospira denitrificans (strain ATCC 33889 / DSM 1251)).